Reading from the N-terminus, the 771-residue chain is MGKVVGIDLGTTNSVVAVMEGGKPIVIANAEGMRTTPSVVGFNKEGELVVGQMGRRQAVLNPQNTFYGVKRFMGRRYTDLTPESKRVAYTIRRDDRDNIKVRCPRLKKDFAPEEISAMILRKLAEEASRYLGEKVTGAVITVPAYFNDSQRQATRDAGKIAGLEVLRIINEPTAASLAYGLDQGRIQKILVFDLGGGTFDVSVLEVGDGIFEVKATSGDTQLGGNDFDRRIVDWLAEKFLEAEKVDLRQDRQALQRLTEAAEKAKIELSGVGTTEINLPFITATEDGPKHLETQLSRSEFEDLCGDLVTRLQRPVKRVLKDAGLSPVQIDEVVLVGGGTRMPMVKGLVRSFIDREPNENVNPDEVVAIGAAIQAGILDGEVKDILLLDVTPLSFGLETIGGVMKKLLPRNTTIPVRKSDIFSTGENNQTVVEVHVLQGEREMASDNISLGRFKLSGIPPAPRGVPQVQVSFDIDANGILQVTARDKTTGREQSITVQGASILSEGEVNRMIQEAETFAAQDRERRERIEKRNSAKALTDQAQRRLKEVTLDFGSAFTVSYRRQVDALCSEILDSLEKDDERRLDRAQADLQDVLYELNREVRLQYDDKEEGFFEAIKKTFTGDFDDDDDYYNRRPAPRDDYRGGNDYGRYDDYNYNAPSRREAPMPRAGAGRGPSLSKDYRSTAYADWDQSRVTRQRPYQGESLGGTYDDRRSSPQDDYSRGDRQKDYDYRENAPSRSGRGGNGRYGERPAQPGRNAPLQNGWDDDDDDWF.

T198 is subject to Phosphothreonine; by autocatalysis. A disordered region spans residues 624 to 771; that stretch reads FDDDDDYYNR…GWDDDDDDWF (148 aa). 2 stretches are compositionally biased toward basic and acidic residues: residues 630 to 652 and 708 to 734; these read YYNRRPAPRDDYRGGNDYGRYDD and YDDRRSSPQDDYSRGDRQKDYDYRENA.

The protein belongs to the heat shock protein 70 family.

Its function is as follows. Acts as a chaperone. In Synechocystis sp. (strain ATCC 27184 / PCC 6803 / Kazusa), this protein is Chaperone protein dnaK3 (dnaK3).